We begin with the raw amino-acid sequence, 198 residues long: Undecaprenyl phosphate transporter A (198 aa).

A run of 5 helical transmembrane segments spans residues 15-35, 47-67, 107-127, 135-155, and 169-189; these read MGYA…EIVL, IGFI…QIFI, VVFS…PAGI, FVVL…YLGI, and GTYT…YFVI.

Belongs to the DedA family.

Its subcellular location is the cell membrane. Flippase that catalyzes the transport of undecaprenyl phosphate (UndP) across the cytoplasmic membrane, from the external side to the cytoplasmic side. Is involved in UndP recycling during peptidoglycan synthesis. The polypeptide is Undecaprenyl phosphate transporter A (Bacillus subtilis (strain 168)).